A 653-amino-acid polypeptide reads, in one-letter code: Endoglin (653 aa).

The first 26 residues, Met1–Ala26, serve as a signal peptide directing secretion. Positions Glu27–Thr47 are OR1, N-terminal part. The tract at residues Glu27–Thr337 is required for interaction with GDF2. Over Glu27–Gly581 the chain is Extracellular. Disulfide bonds link Cys31–Cys209, Cys54–Cys184, Cys244–Cys330, Cys350–Cys382, Cys363–Cys442, Cys394–Cys412, and Cys493–Cys549. The tract at residues Ser48 to Arg201 is OR2. 3 N-linked (GlcNAc...) asparagine glycosylation sites follow: Asn89, Asn135, and Asn266. Positions Ala202–Cys330 are OR1, C-terminal part. The segment at Gln270–Phe282 is essential for interaction with GDF2. 2 N-linked (GlcNAc...) asparagine glycosylation sites follow: Asn307 and Asn322. The 148-residue stretch at Cys363–Arg510 folds into the ZP domain. The helical transmembrane segment at Leu582–Trp606 threads the bilayer. The Cytoplasmic portion of the chain corresponds to Tyr607–Ala653. Residues Val624–Ser634 show a composition bias toward low complexity. The interval Val624 to Ala653 is disordered. The span at Thr635–Ala653 shows a compositional bias: polar residues. Residues Ser641 and Ser644 each carry the phosphoserine; by TGFBR1 modification.

Homodimer; disulfide-linked. Forms a heteromeric complex with the signaling receptors for transforming growth factor-beta: TGFBR1 and/or TGFBR2. Interacts with TGFB1. It is able to bind TGFB1 and TGFB2 with high affinity, but not TGFB3. Interacts with GDF2, forming a heterotetramer with a 2:2 stoichiometry. Interacts with ACVRL1. Can form a heteromeric complex with GDF2 and ACVRL1. Interacts with BMP10. Interacts with DYNLT4. Interacts with ARRB2. Detected on blood vessels (at protein level). Detected on adult pulmonary artery, capillaries supporting the heart muscle and lung alveolar capillary endothelial cells. Endoglin is restricted to endothelial cells in all tissues except bone marrow and is also found in stromal cells within the connective tissue of intestine, stomach, heart, skeletal muscle, uterus, ovary, oviduct, testis and thymus.

It localises to the cell membrane. Functionally, vascular endothelium glycoprotein that plays an important role in the regulation of angiogenesis. Required for normal structure and integrity of adult vasculature. Regulates the migration of vascular endothelial cells. Required for normal extraembryonic angiogenesis and for embryonic heart development. May regulate endothelial cell shape changes in response to blood flow, which drive vascular remodeling and establishment of normal vascular morphology during angiogenesis. May play a role in the binding of endothelial cells to integrins. Acts as a TGF-beta coreceptor and is involved in the TGF-beta/BMP signaling cascade that ultimately leads to the activation of SMAD transcription factors. Required for GDF2/BMP9 signaling through SMAD1 in endothelial cells and modulates TGFB1 signaling through SMAD3. This is Endoglin (Eng) from Mus musculus (Mouse).